A 703-amino-acid chain; its full sequence is Epidermal growth factor receptor (703 aa).

Residues 1-30 form the signal peptide; that stretch reads MGVRSPLSASGPRGAAVLVLLLLGVALCSA. At 31 to 654 the chain is on the extracellular side; the sequence is VEEKKVCQGT…GCPNGSKTPS (624 aa). An intrachain disulfide couples Cys37 to Cys64. N-linked (GlcNAc...) asparagine glycosylation is found at Asn134, Asn190, and Asn200. Intrachain disulfides connect Cys164–Cys194, Cys197–Cys206, Cys201–Cys214, Cys222–Cys230, Cys226–Cys238, Cys239–Cys247, Cys243–Cys255, Cys258–Cys267, Cys271–Cys298, Cys302–Cys314, Cys318–Cys333, Cys336–Cys340, and Cys344–Cys369. 3 N-linked (GlcNAc...) asparagine glycosylation sites follow: Asn359, Asn368, and Asn420. Cystine bridges form between Cys477–Cys506, Cys513–Cys522, Cys517–Cys530, Cys533–Cys542, Cys546–Cys562, Cys565–Cys581, Cys569–Cys589, Cys592–Cys601, Cys605–Cys627, Cys630–Cys638, and Cys634–Cys646. Asn573 and Asn578 each carry an N-linked (GlcNAc...) asparagine glycan. N-linked (GlcNAc...) asparagine glycans are attached at residues Asn613 and Asn633. Residue Asn648 is glycosylated (N-linked (GlcNAc...) asparagine). The helical transmembrane segment at 655 to 667 threads the bilayer; sequence IAAGVVGGLLCLV. Over 668 to 703 the chain is Cytoplasmic; it reads VVGLGIGLYLRRRHIVRKRTLRRLLQERELVEPLTP. A phosphothreonine mark is found at Thr687 and Thr702.

This sequence belongs to the protein kinase superfamily. Tyr protein kinase family. EGF receptor subfamily. As to quaternary structure, binding of the ligand triggers homo- and/or heterodimerization of the receptor triggering its autophosphorylation. In terms of processing, phosphorylated. Autophosphorylates.

Its subcellular location is the cell membrane. The protein resides in the endoplasmic reticulum membrane. It is found in the golgi apparatus membrane. It localises to the nucleus membrane. The protein localises to the endosome. Its subcellular location is the endosome membrane. The protein resides in the nucleus. It catalyses the reaction L-tyrosyl-[protein] + ATP = O-phospho-L-tyrosyl-[protein] + ADP + H(+). With respect to regulation, endocytosis and inhibition of the activated EGFR by phosphatases constitute immediate regulatory mechanisms. Moreover, inducible feedback inhibitors may constitute alternative regulatory mechanisms for the EGFR signaling. Receptor tyrosine kinase binding ligands of the EGF family and activating several signaling cascades to convert extracellular cues into appropriate cellular responses. Known ligands include EGF and TGFA/TGF-alpha. Ligand binding triggers receptor homo- and/or heterodimerization and autophosphorylation on key cytoplasmic residues. The phosphorylated receptor recruits adapter proteins like GRB2 which in turn activates complex downstream signaling cascades. Activates at least 4 major downstream signaling cascades including the RAS-RAF-MEK-ERK, PI3 kinase-AKT, PLCgamma-PKC and STATs modules. May also activate the NF-kappa-B signaling cascade. In Gallus gallus (Chicken), this protein is Epidermal growth factor receptor (EGFR).